The following is a 337-amino-acid chain: Protein FAM76B (337 aa).

The segment at 143–241 is disordered; sequence EQRKSLGSTH…INQSTDSGGT (99 aa). Residues 147–159 show a composition bias toward low complexity; that stretch reads SLGSTHSNSSSSS. The span at 166 to 187 shows a compositional bias: basic residues; sequence HHSKHHHHHHHHHRHSSSHHKI. The segment covering 213-222 has biased composition (basic and acidic residues); sequence TPKKKPKLEF. Polar residues predominate over residues 226–241; the sequence is NGDSSSINQSTDSGGT. A coiled-coil region spans residues 301 to 326; that stretch reads KDFVEQLQGKNRELLKQVAALSKGKK.

The protein belongs to the FAM76 family.

Its function is as follows. Plays a role in hematopoiesis and immune system development, and participates in the inflammatory response. This is Protein FAM76B (fam76b) from Xenopus laevis (African clawed frog).